Consider the following 208-residue polypeptide: dITP/XTP pyrophosphatase (208 aa).

S11 to K16 contacts substrate. The Proton acceptor role is filled by D76. D76 lines the Mg(2+) pocket. Residues S77, F158–D161, K184, and H189–R190 each bind substrate.

The protein belongs to the HAM1 NTPase family. As to quaternary structure, homodimer. It depends on Mg(2+) as a cofactor.

The enzyme catalyses XTP + H2O = XMP + diphosphate + H(+). The catalysed reaction is dITP + H2O = dIMP + diphosphate + H(+). It catalyses the reaction ITP + H2O = IMP + diphosphate + H(+). Its function is as follows. Pyrophosphatase that catalyzes the hydrolysis of nucleoside triphosphates to their monophosphate derivatives, with a high preference for the non-canonical purine nucleotides XTP (xanthosine triphosphate), dITP (deoxyinosine triphosphate) and ITP. Seems to function as a house-cleaning enzyme that removes non-canonical purine nucleotides from the nucleotide pool, thus preventing their incorporation into DNA/RNA and avoiding chromosomal lesions. The chain is dITP/XTP pyrophosphatase from Mycobacterium leprae (strain TN).